The following is a 310-amino-acid chain: L-lactate dehydrogenase (310 aa).

Residues valine 11, aspartate 32, tyrosine 62, and 76 to 77 (GV) contribute to the NAD(+) site. Substrate contacts are provided by residues glutamine 79, arginine 85, and 117 to 120 (NPVD). NAD(+)-binding positions include 115–117 (ATN) and serine 140. A substrate-binding site is contributed by 145 to 148 (DTAR). Beta-D-fructose 1,6-bisphosphate contacts are provided by arginine 150 and histidine 165. Histidine 172 functions as the Proton acceptor in the catalytic mechanism. Phosphotyrosine is present on tyrosine 218. Threonine 227 lines the substrate pocket.

This sequence belongs to the LDH/MDH superfamily. LDH family. In terms of assembly, homotetramer.

Its subcellular location is the cytoplasm. It catalyses the reaction (S)-lactate + NAD(+) = pyruvate + NADH + H(+). It participates in fermentation; pyruvate fermentation to lactate; (S)-lactate from pyruvate: step 1/1. Activated by citrate at pH 5. Allosterically activated by fructose 1,6-bisphosphate (FBP) at pH from 5.8 to 7.2. Its function is as follows. Catalyzes the conversion of lactate to pyruvate. The chain is L-lactate dehydrogenase from Thermus aquaticus.